The chain runs to 113 residues: Hydrogenase maturation factor HypA (113 aa).

His-2 provides a ligand contact to Ni(2+). 4 residues coordinate Zn(2+): Cys-73, Cys-76, Cys-89, and Cys-92.

It belongs to the HypA/HybF family.

In terms of biological role, involved in the maturation of [NiFe] hydrogenases. Required for nickel insertion into the metal center of the hydrogenase. This is Hydrogenase maturation factor HypA from Cereibacter sphaeroides (strain KD131 / KCTC 12085) (Rhodobacter sphaeroides).